The chain runs to 256 residues: Chlorophyll a-b binding protein CP24 10A, chloroplastic (256 aa).

A run of 2 helical transmembrane segments spans residues 106-126 and 134-154; these read WAMAAVLGIFVGQAWSGIPWF and AIAPFSFGTLLGTQLILMGWV.

It belongs to the ELIP/psbS family.

The protein resides in the plastid. It is found in the chloroplast thylakoid membrane. This Solanum lycopersicum (Tomato) protein is Chlorophyll a-b binding protein CP24 10A, chloroplastic (CAP10A).